The primary structure comprises 261 residues: Cytochrome c oxidase subunit 3 (261 aa).

Topologically, residues 1–15 (MTHQTHAYHMVNPSP) are mitochondrial matrix. Residues 16-34 (WPLTGALSALLMTSGLAMW) form a helical membrane-spanning segment. At 35–40 (FHYNSM) the chain is on the mitochondrial intermembrane side. The helical transmembrane segment at 41–66 (LLLTLGLMTNLLTMYQWWRDIVREST) threads the bilayer. The Mitochondrial matrix segment spans residues 67-72 (FQGHHT). A helical transmembrane segment spans residues 73 to 105 (LVVQKGLRYGMILFIISEVFFFSGFFWAFYHSS). Residues 106 to 128 (LAPTPELGGCWPPTGIHPLNPME) lie on the Mitochondrial intermembrane side of the membrane. A helical membrane pass occupies residues 129-152 (VPLLNTSVLLASGVSITWAHHSLM). Residues 153–155 (EGN) lie on the Mitochondrial matrix side of the membrane. A helical membrane pass occupies residues 156-183 (RKHMLQALFITISLGVYFTLLQASEYYE). At 184-190 (APFTISD) the chain is on the mitochondrial intermembrane side. Residues 191 to 223 (GIYGSTFFVATGFHGLHVIIGSTFLIVCFLRQL) form a helical membrane-spanning segment. Residues 224–232 (KFHFTSNHH) lie on the Mitochondrial matrix side of the membrane. The chain crosses the membrane as a helical span at residues 233-256 (FGFEAAAWYWHFVDVVWLFLYVSI). The Mitochondrial intermembrane portion of the chain corresponds to 257–261 (YWWGS).

This sequence belongs to the cytochrome c oxidase subunit 3 family. As to quaternary structure, component of the cytochrome c oxidase (complex IV, CIV), a multisubunit enzyme composed of 14 subunits. The complex is composed of a catalytic core of 3 subunits MT-CO1, MT-CO2 and MT-CO3, encoded in the mitochondrial DNA, and 11 supernumerary subunits COX4I, COX5A, COX5B, COX6A, COX6B, COX6C, COX7A, COX7B, COX7C, COX8 and NDUFA4, which are encoded in the nuclear genome. The complex exists as a monomer or a dimer and forms supercomplexes (SCs) in the inner mitochondrial membrane with NADH-ubiquinone oxidoreductase (complex I, CI) and ubiquinol-cytochrome c oxidoreductase (cytochrome b-c1 complex, complex III, CIII), resulting in different assemblies (supercomplex SCI(1)III(2)IV(1) and megacomplex MCI(2)III(2)IV(2)).

It is found in the mitochondrion inner membrane. It carries out the reaction 4 Fe(II)-[cytochrome c] + O2 + 8 H(+)(in) = 4 Fe(III)-[cytochrome c] + 2 H2O + 4 H(+)(out). Component of the cytochrome c oxidase, the last enzyme in the mitochondrial electron transport chain which drives oxidative phosphorylation. The respiratory chain contains 3 multisubunit complexes succinate dehydrogenase (complex II, CII), ubiquinol-cytochrome c oxidoreductase (cytochrome b-c1 complex, complex III, CIII) and cytochrome c oxidase (complex IV, CIV), that cooperate to transfer electrons derived from NADH and succinate to molecular oxygen, creating an electrochemical gradient over the inner membrane that drives transmembrane transport and the ATP synthase. Cytochrome c oxidase is the component of the respiratory chain that catalyzes the reduction of oxygen to water. Electrons originating from reduced cytochrome c in the intermembrane space (IMS) are transferred via the dinuclear copper A center (CU(A)) of subunit 2 and heme A of subunit 1 to the active site in subunit 1, a binuclear center (BNC) formed by heme A3 and copper B (CU(B)). The BNC reduces molecular oxygen to 2 water molecules using 4 electrons from cytochrome c in the IMS and 4 protons from the mitochondrial matrix. The polypeptide is Cytochrome c oxidase subunit 3 (MT-CO3) (Ceratotherium simum (White rhinoceros)).